Reading from the N-terminus, the 328-residue chain is tRNA uridine(34) hydroxylase (328 aa).

One can recognise a Rhodanese domain in the interval 130 to 224 (LDEDTVVLDT…YGKDPEVQGE (95 aa)). C184 functions as the Cysteine persulfide intermediate in the catalytic mechanism.

The protein belongs to the TrhO family.

It catalyses the reaction uridine(34) in tRNA + AH2 + O2 = 5-hydroxyuridine(34) in tRNA + A + H2O. Its function is as follows. Catalyzes oxygen-dependent 5-hydroxyuridine (ho5U) modification at position 34 in tRNAs. The sequence is that of tRNA uridine(34) hydroxylase from Streptococcus pyogenes serotype M49 (strain NZ131).